A 118-amino-acid chain; its full sequence is Large ribosomal subunit protein bL20 (118 aa).

The protein belongs to the bacterial ribosomal protein bL20 family.

Binds directly to 23S ribosomal RNA and is necessary for the in vitro assembly process of the 50S ribosomal subunit. It is not involved in the protein synthesizing functions of that subunit. This is Large ribosomal subunit protein bL20 from Staphylococcus aureus (strain Mu3 / ATCC 700698).